Consider the following 553-residue polypeptide: Putative transport protein YidE (553 aa).

The next 5 helical transmembrane spans lie at 4–24, 28–48, 65–85, 95–115, and 158–178; these read IALTVSILALVAVVGLFIGNV, GVGLGIGGVLFGGIIVGHFVS, FGLILFVYTIGIQVGPGFFAS, LFAVLIVIIGGLVTAILHKLF, and MSYAMAYPFGICGILFTMWML. RCK C-terminal domains lie at 191 to 276 and 279 to 361; these read QQHE…VIGQ and DTSL…VLGN. Helical transmembrane passes span 371–391, 393–413, 439–459, 464–484, 493–513, and 533–553; these read MLPVFIGIGLGVLLGSIPVFV, GFPAALKLGLAGGPLIMALIL, IVLFLSVVGLKSGGDFIHTLV, LSWIGYGALITAVPLITVGIL, YLTMCGMLAGSMTDPPALAFA, and LVMFLRIITPQLLAVLFWSIG.

This sequence belongs to the AAE transporter (TC 2.A.81) family. YidE subfamily.

The protein resides in the cell membrane. The polypeptide is Putative transport protein YidE (Escherichia coli O127:H6 (strain E2348/69 / EPEC)).